A 442-amino-acid polypeptide reads, in one-letter code: ATP-dependent protease ATPase subunit HslU (442 aa).

Residues isoleucine 18, 60–65, aspartate 255, glutamate 320, and arginine 392 each bind ATP; that span reads GVGKTE.

It belongs to the ClpX chaperone family. HslU subfamily. In terms of assembly, a double ring-shaped homohexamer of HslV is capped on each side by a ring-shaped HslU homohexamer. The assembly of the HslU/HslV complex is dependent on binding of ATP.

Its subcellular location is the cytoplasm. In terms of biological role, ATPase subunit of a proteasome-like degradation complex; this subunit has chaperone activity. The binding of ATP and its subsequent hydrolysis by HslU are essential for unfolding of protein substrates subsequently hydrolyzed by HslV. HslU recognizes the N-terminal part of its protein substrates and unfolds these before they are guided to HslV for hydrolysis. This Hahella chejuensis (strain KCTC 2396) protein is ATP-dependent protease ATPase subunit HslU.